The sequence spans 196 residues: FAD-linked sulfhydryl oxidase ERV2 (196 aa).

Residues 1 to 12 (MKQIVKRSHAIR) are Cytoplasmic-facing. A helical; Signal-anchor transmembrane segment spans residues 13-35 (IVAALGIIGLWMFFSSNELSIAT). The Lumenal portion of the chain corresponds to 36–196 (PGLIKAKSGI…SLEKEAKQHG (161 aa)). The region spanning 72 to 174 (MGDDKVKKEV…YDCATILEDY (103 aa)) is the ERV/ALR sulfhydryl oxidase domain. K78, R83, and W86 together coordinate FAD. Cysteines 121 and 124 form a disulfide. Positions 127, 150, 153, 157, 162, and 174 each coordinate FAD. C150 and C167 form a disulfide bridge. C176 and C178 are oxidised to a cystine.

Homodimer. Interacts with the substrate protein PDI1, forming transient intermolecular disulfide bridges. The cofactor is FAD.

The protein localises to the endoplasmic reticulum membrane. The enzyme catalyses 2 R'C(R)SH + O2 = R'C(R)S-S(R)CR' + H2O2. Functionally, FAD-dependent sulfhydryl oxidase that catalyzes disulfide bond formation in the endoplasmic reticulum lumen in parallel to ERO1. The polypeptide is FAD-linked sulfhydryl oxidase ERV2 (ERV2) (Saccharomyces cerevisiae (strain ATCC 204508 / S288c) (Baker's yeast)).